Consider the following 716-residue polypeptide: Segment polarity protein dishevelled homolog DVL-3 (716 aa).

In terms of domain architecture, DIX spans 1 to 82 (MGETKIIYHL…RVVSWLVSAE (82 aa)). At R27 the chain carries Omega-N-methylarginine. Residues S48 and S125 each carry the phosphoserine modification. The interval 85 to 235 (HPDPAPFCAD…VSRIERSSSF (151 aa)) is disordered. A compositionally biased stretch (basic and acidic residues) spans 142-156 (QRERPRRRDGPEHAT). Over residues 175–190 (SSSTLMSSELETTSFF) the composition is skewed to low complexity. Residue S192 is modified to Phosphoserine. A compositionally biased stretch (low complexity) spans 199 to 212 (SRFSSSTEQSSASR). An Omega-N-methylarginine modification is found at R212. A compositionally biased stretch (basic residues) spans 213–226 (LMRRHKRRRRKQKV). Positions 249–321 (TVTLNMEKYN…NDDAVRVLRE (73 aa)) constitute a PDZ domain. R271 carries the asymmetric dimethylarginine; by PRMT1; alternate modification. R271 and R342 each carry symmetric dimethylarginine; by PRMT7; alternate. The residue at position 342 (R342) is an Omega-N-methylarginine; alternate. Position 346 is a phosphothreonine (T346). Residues 422-496 (PESGLEVRDR…SEQCYYIFGD (75 aa)) form the DEP domain. Residues 546-691 (PYNPHPGFPE…PPGRDLASVP (146 aa)) are disordered. The span at 565 to 581 (ASSQHSEGSRSSGSNRS) shows a compositional bias: low complexity. 2 stretches are compositionally biased toward basic and acidic residues: residues 582 to 595 (GSDRRKEKDPKAGD) and 604 to 622 (ESDHTTRSSLRGPRERAPS). Symmetric dimethylarginine; by PRMT7 is present on R614. Pro residues predominate over residues 653 to 682 (YGPPGVPPLYGPPMLMMPPPPAAMGPPGAP). Phosphoserine is present on S697. At R698 the chain carries Omega-N-methylarginine; alternate. Dimethylated arginine; alternate is present on R698. S700 carries the phosphoserine modification.

This sequence belongs to the DSH family. In terms of assembly, interacts (via the PDZ domain) with the C-terminal regions of VANGL1 and VANGL2. Interacts (via the region containing both the PDZ and DEP domains) with LRRFIP2; the DIX domain may inhibit this interaction. Interacts with CYLD, CEP164 and DAB2. Interacts with DCDC2. Interacts with FOXK1 and FOXK2. Interacts with DAAM2. Ubiquitinated. Deubiquitinated by CYLD, which acts on 'Lys-63'-linked ubiquitin chains. Post-translationally, phosphorylated by CSNK1D. In terms of processing, arginine methylation may function as a switch in regulation of function in Wnt signaling.

It is found in the cytoplasm. Its function is as follows. Involved in the signal transduction pathway mediated by multiple Wnt genes. This chain is Segment polarity protein dishevelled homolog DVL-3 (DVL3), found in Homo sapiens (Human).